The chain runs to 488 residues: L-arabinose isomerase 2 (488 aa).

Positions 306, 331, 348, and 447 each coordinate Mn(2+).

The protein belongs to the arabinose isomerase family. Mn(2+) serves as cofactor.

The enzyme catalyses beta-L-arabinopyranose = L-ribulose. It participates in carbohydrate degradation; L-arabinose degradation via L-ribulose; D-xylulose 5-phosphate from L-arabinose (bacterial route): step 1/3. Functionally, catalyzes the conversion of L-arabinose to L-ribulose. The chain is L-arabinose isomerase 2 from Clostridium acetobutylicum (strain ATCC 824 / DSM 792 / JCM 1419 / IAM 19013 / LMG 5710 / NBRC 13948 / NRRL B-527 / VKM B-1787 / 2291 / W).